The primary structure comprises 398 residues: Mannitol-1-phosphate 5-dehydrogenase (398 aa).

10 to 21 (AVHFGAGNIGRG) lines the NAD(+) pocket. Residue K221 is part of the active site.

The protein belongs to the mannitol dehydrogenase family. Monomer.

It catalyses the reaction D-mannitol 1-phosphate + NAD(+) = beta-D-fructose 6-phosphate + NADH + H(+). Catalyzes the NAD(H)-dependent interconversion of D-fructose 6-phosphate and D-mannitol 1-phosphate in the mannitol metabolic pathway. This chain is Mannitol-1-phosphate 5-dehydrogenase, found in Neurospora crassa (strain ATCC 24698 / 74-OR23-1A / CBS 708.71 / DSM 1257 / FGSC 987).